The following is an 864-amino-acid chain: MATNGHFATIGVDNDKTAYEHGVQVIDENKEFNPNISKYLSLENVTPAGFNYHLISVFGSQSTGKSTLLNHLFGTHFSVMSDSERRQTTKGIWMSKNKKEGEATVDPTLRMADNILVMDVEGTDGRERGEDQDFERKSALFALATSEVLIVNIWEHQVGLYQGANMGLLKTVFEVNLQLFLKDKNTTHRSLLFFVIRDFVGATPLKNLQKTLMEDMARLWESISKPPGLESSSVHDYFDFQFYGLPHKSYQPEQFVAETKKLSLRFREGQRDPSMDARRGEFSEGGVFLPEYHRRIPADGFSRYAEGIWDQIVNNKDLDLPTQQELLAQFRCDEILREVMIAFDEAIVPFEEKQSQSARLGEPEVLGGLGAAMRSSRAKAVKNFETEASRYHKGVYQRKRAELESKVDTRLKALLQGQLNAAHKSGINEFSEAVSSSVKSGQKQGTGYDFAEIVNEEVKKAIAKFEDVARSTVVEGTTWSDYKQELALYEKELADVSGRLRREEMRRLANRVERWVQSRLGESVGLEFNALGSGRAGGGAPETGEKPLEKAFWDRVWNVFVETVLDAERRFTDRASSFDASLEEVDVGLWRLRRKSWGVLRAKIDEEMTEGNLLLKLRENFEDKFRYDDAGVPRIWRPTDDIEGIYTRARESTLTLIPLLSRFRLAETSAPPPLDRWIGHTPSSATPADEEDLPPIGGVDEEEGKSLDEEMMILSEAKRQELTVRFKKAADGVYVEAKRSAIGGMTQVPLYFYGLLLALGWNEIIAVLRNPAYFFLLFVCAVGAYVTYQLNLWGPIIKMTEAASSQALVEGKKRLREFLESSDTGRQAIAMSAGSGRSGEQYELSDLSKKGKARTSADEDMDDL.

The Cytoplasmic segment spans residues 1-747 (MATNGHFATI…KRSAIGGMTQ (747 aa)). Residues 49–305 (GFNYHLISVF…IPADGFSRYA (257 aa)) form the GB1/RHD3-type G domain. 59 to 66 (GSQSTGKS) is a binding site for GTP. Positions 480–506 (SDYKQELALYEKELADVSGRLRREEMR) form a coiled coil. A disordered region spans residues 675 to 701 (DRWIGHTPSSATPADEEDLPPIGGVDE). A compositionally biased stretch (acidic residues) spans 688–701 (ADEEDLPPIGGVDE). A helical transmembrane segment spans residues 748 to 768 (VPLYFYGLLLALGWNEIIAVL). The Lumenal segment spans residues 769-771 (RNP). Residues 772–792 (AYFFLLFVCAVGAYVTYQLNL) form a helical membrane-spanning segment. Topologically, residues 793-864 (WGPIIKMTEA…TSADEDMDDL (72 aa)) are cytoplasmic. The segment at 830-864 (AMSAGSGRSGEQYELSDLSKKGKARTSADEDMDDL) is disordered.

The protein belongs to the TRAFAC class dynamin-like GTPase superfamily. GB1/RHD3 GTPase family. RHD3 subfamily.

It localises to the endoplasmic reticulum membrane. In terms of biological role, cooperates with the reticulon proteins and tubule-shaping DP1 family proteins to generate and maintain the structure of the tubular endoplasmic reticulum network. Has GTPase activity, which is required for its function in ER organization. This Neosartorya fischeri (strain ATCC 1020 / DSM 3700 / CBS 544.65 / FGSC A1164 / JCM 1740 / NRRL 181 / WB 181) (Aspergillus fischerianus) protein is Protein sey1 (sey1).